Consider the following 366-residue polypeptide: Class I histocompatibility antigen, Gogo-C*0203 alpha chain (366 aa).

A signal peptide spans 1 to 24 (MRVMAPRTLILLLSGALALTETWA). Residues 25–114 (GSHSMRYFYT…LRGYYNQSED (90 aa)) are alpha-1. Residues 25-308 (GSHSMRYFYT…EPSSQPTIPI (284 aa)) are Extracellular-facing. Asn110 carries an N-linked (GlcNAc...) asparagine glycan. The interval 115-206 (GSHTLQSMYG…ENGKETLQRA (92 aa)) is alpha-2. 2 disulfides stabilise this stretch: Cys125-Cys188 and Cys227-Cys283. The alpha-3 stretch occupies residues 207–298 (EPPKTHVTHH…GLPEPLTLRW (92 aa)). An Ig-like C1-type domain is found at 209–297 (PKTHVTHHPL…EGLPEPLTLR (89 aa)). The interval 299-308 (EPSSQPTIPI) is connecting peptide. The chain crosses the membrane as a helical span at residues 309–332 (VGIVVGLAVLVVLAVLGAVVTAMM). Over 333 to 366 (CRRKSSGGKGGSCSQAACSNSAQGSDESLITCKA) the chain is Cytoplasmic.

Belongs to the MHC class I family. In terms of assembly, heterodimer of an alpha chain and a beta chain (beta-2-microglobulin).

Its subcellular location is the membrane. Involved in the presentation of foreign antigens to the immune system. This Gorilla gorilla gorilla (Western lowland gorilla) protein is Class I histocompatibility antigen, Gogo-C*0203 alpha chain.